The primary structure comprises 107 residues: Nucleoid-associated protein PPA0205 (107 aa).

The protein belongs to the YbaB/EbfC family. Homodimer.

The protein resides in the cytoplasm. It is found in the nucleoid. In terms of biological role, binds to DNA and alters its conformation. May be involved in regulation of gene expression, nucleoid organization and DNA protection. The polypeptide is Nucleoid-associated protein PPA0205 (Cutibacterium acnes (strain DSM 16379 / KPA171202) (Propionibacterium acnes)).